The chain runs to 504 residues: MKNEKRKTGIEPKVFFPPLIIVGILCWLTVRDLDAANVVINAVFSYVTNVWGWAFEWYMVVMLFGWFWLVFGPYAKKRLGNEPPEFSTASWIFMMFASCTSAAVLFWGSIEIYYYISTPPFGLEPNSTGAKELGLAYSLFHWGPLPWATYSFLSVAFAYFFFVRKMEVIRPSSTLVPLVGEKHAKGLFGTIVDNFYLVALIFAMGTSLGLATPLVTECMQWLFGIPHTLQLDAIIITCWIILHAICVACGLQKGGRIPSDVRSYLSFLMLGWVFIVSGASFIMNYFTDSVGMLLMYLPRMLFYTDPIAKGGFPQGWTVFYWAWWVIYAIQMSIFLARISRGRTVRELCFGMVMGLTASTWILWTVLGSNTLLLMDKNIINIPNLIEQYGVARAIIETWAALPLSTATMWGFFILCFIATVTLVNACSYTLAMSTCREVRDGEEPPLLVRIGWSILVGIIGIVLLALGGLKPIQTAIIAGGCPLFFVNIMVTLSFIKDAKQNWKD.

Transmembrane regions (helical) follow at residues Ile-10–Val-30, Trp-51–Phe-71, Ile-92–Ile-112, Gly-143–Val-163, Phe-195–Val-215, Leu-231–Leu-251, Ser-263–Met-283, Trp-316–Ala-336, Leu-347–Gly-367, Trp-398–Ala-418, Leu-446–Leu-466, and Ala-475–Ile-495.

The protein belongs to the BCCT transporter (TC 2.A.15) family. CaiT subfamily. As to quaternary structure, homotrimer.

The protein localises to the cell inner membrane. It catalyses the reaction 4-(trimethylamino)butanoate(in) + (R)-carnitine(out) = 4-(trimethylamino)butanoate(out) + (R)-carnitine(in). It functions in the pathway amine and polyamine metabolism; carnitine metabolism. In terms of biological role, catalyzes the exchange of L-carnitine for gamma-butyrobetaine. The protein is L-carnitine/gamma-butyrobetaine antiporter of Shigella flexneri serotype 5b (strain 8401).